Here is a 170-residue protein sequence, read N- to C-terminus: Photosystem II extrinsic protein V (170 aa).

A signal peptide spans 1–33; it reads MVSVFSSLRQSFKGLLVLVPVLIGLAFISPAEA. Heme c-binding residues include Cys70, Cys73, His74, and Met137.

It belongs to the cytochrome c family. PsbV subfamily. As to quaternary structure, PSII is composed of 1 copy each of membrane proteins PsbA, PsbB, PsbC, PsbD, PsbE, PsbF, PsbH, PsbI, PsbJ, PsbK, PsbL, PsbM, PsbT, PsbX, PsbY, PsbZ, Psb30/Ycf12, peripheral proteins PsbO, CyanoQ (PsbQ), PsbU, PsbV and a large number of cofactors. It forms dimeric complexes. Heme c serves as cofactor.

It localises to the cellular thylakoid membrane. In terms of biological role, one of the extrinsic, lumenal subunits of photosystem II (PSII). PSII is a light-driven water plastoquinone oxidoreductase, using light energy to abstract electrons from H(2)O, generating a proton gradient subsequently used for ATP formation. The extrinsic proteins stabilize the structure of photosystem II oxygen-evolving complex (OEC), the ion environment of oxygen evolution and protect the OEC against heat-induced inactivation. Low-potential cytochrome c that plays a role in the OEC of PSII. The sequence is that of Photosystem II extrinsic protein V from Synechococcus sp. (strain CC9902).